The primary structure comprises 245 residues: Probable phosphatase YcdX (245 aa).

Residues His7, His9, His15, His40, Glu73, His101, His131, Asp192, and His194 each coordinate Zn(2+).

It belongs to the PHP family. As to quaternary structure, homotrimer. Zn(2+) serves as cofactor.

The sequence is that of Probable phosphatase YcdX from Escherichia coli O127:H6 (strain E2348/69 / EPEC).